Here is a 136-residue protein sequence, read N- to C-terminus: T-cell receptor alpha chain constant (136 aa).

Positions Ser-19–Met-103 constitute an Ig-like C1-type domain. A disulfide bridge links Cys-22 with Cys-72. Asn-66, Asn-80, and Asn-109 each carry an N-linked (GlcNAc...) asparagine glycan. The segment at Cys-90–Ser-111 is connecting peptide. A helical transmembrane segment spans residues Ser-111–Leu-131. Residues Arg-132–Ser-136 lie on the Cytoplasmic side of the membrane.

As to quaternary structure, alpha-beta TR is a heterodimer composed of an alpha and beta chain; disulfide-linked. The alpha-beta TR is associated with the transmembrane signaling CD3 coreceptor proteins to form the TR-CD3 (TcR or TCR). The assembly of alpha-beta TR heterodimers with CD3 occurs in the endoplasmic reticulum where a single alpha-beta TR heterodimer associates with one CD3D-CD3E heterodimer, one CD3G-CD3E heterodimer and one CD247 homodimer forming a stable octameric structure. CD3D-CD3E and CD3G-CD3E heterodimers preferentially associate with TR alpha and TR beta chains, respectively. The association of the CD247 homodimer is the last step of TcR assembly in the endoplasmic reticulum and is required for transport to the cell surface.

The protein resides in the cell membrane. In terms of biological role, constant region of T cell receptor (TR) alpha chain. Alpha-beta T cell receptors are antigen specific receptors which are essential to the immune response and are present on the cell surface of T lymphocytes. Recognize peptide-major histocompatibility (MH) (pMH) complexes that are displayed by antigen presenting cells (APC), a prerequisite for efficient T cell adaptive immunity against pathogens. Binding of alpha-beta TR to pMH complex initiates TR-CD3 clustering on the cell surface and intracellular activation of LCK that phosphorylates the ITAM motifs of CD3G, CD3D, CD3E and CD247 enabling the recruitment of ZAP70. In turn, ZAP70 phosphorylates LAT, which recruits numerous signaling molecules to form the LAT signalosome. The LAT signalosome propagates signal branching to three major signaling pathways, the calcium, the mitogen-activated protein kinase (MAPK) kinase and the nuclear factor NF-kappa-B (NF-kB) pathways, leading to the mobilization of transcription factors that are critical for gene expression and essential for T cell growth and differentiation. The T cell repertoire is generated in the thymus, by V-(D)-J rearrangement. This repertoire is then shaped by intrathymic selection events to generate a peripheral T cell pool of self-MH restricted, non-autoaggressive T cells. Post-thymic interaction of alpha-beta TR with the pMH complexes shapes TR structural and functional avidity. This is T-cell receptor alpha chain constant from Mus musculus (Mouse).